A 554-amino-acid chain; its full sequence is Carboxypeptidase Y homolog A (554 aa).

The first 17 residues, 1–17, serve as a signal peptide directing secretion; sequence MRISASTVLLGAASAAS. Positions 18–137 are excised as a propeptide; that stretch reads AASFQNQAQQ…QLDNFNLRVK (120 aa). 5 disulfide bridges follow: cysteine 191-cysteine 431, cysteine 325-cysteine 339, cysteine 349-cysteine 372, cysteine 356-cysteine 365, and cysteine 394-cysteine 401. An N-linked (GlcNAc...) asparagine glycan is attached at asparagine 222. Residue serine 278 is part of the active site. The active site involves aspartate 470. Asparagine 518 carries an N-linked (GlcNAc...) asparagine glycan. Histidine 529 is a catalytic residue.

It belongs to the peptidase S10 family.

Its subcellular location is the vacuole. It carries out the reaction Release of a C-terminal amino acid with broad specificity.. In terms of biological role, vacuolar carboxypeptidase involved in degradation of small peptides. Digests preferentially peptides containing an aliphatic or hydrophobic residue in P1' position, as well as methionine, leucine or phenylalanine in P1 position of ester substrate. The protein is Carboxypeptidase Y homolog A (CPYA) of Sordaria macrospora (strain ATCC MYA-333 / DSM 997 / K(L3346) / K-hell).